A 123-amino-acid chain; its full sequence is Large ribosomal subunit protein uL14 (123 aa).

Belongs to the universal ribosomal protein uL14 family. As to quaternary structure, part of the 50S ribosomal subunit. Forms a cluster with proteins L3 and L19. In the 70S ribosome, L14 and L19 interact and together make contacts with the 16S rRNA in bridges B5 and B8.

In terms of biological role, binds to 23S rRNA. Forms part of two intersubunit bridges in the 70S ribosome. The chain is Large ribosomal subunit protein uL14 from Serratia proteamaculans (strain 568).